The chain runs to 178 residues: Large ribosomal subunit protein uL16 (178 aa).

Belongs to the universal ribosomal protein uL16 family.

The polypeptide is Large ribosomal subunit protein uL16 (Pyrobaculum calidifontis (strain DSM 21063 / JCM 11548 / VA1)).